A 238-amino-acid chain; its full sequence is Ribosomal RNA small subunit methyltransferase G (238 aa).

S-adenosyl-L-methionine-binding positions include Gly-77, Phe-82, 128-129, and Arg-147; that span reads AE.

The protein belongs to the methyltransferase superfamily. RNA methyltransferase RsmG family.

It is found in the cytoplasm. Specifically methylates the N7 position of guanine in position 535 of 16S rRNA. This is Ribosomal RNA small subunit methyltransferase G from Geobacillus kaustophilus (strain HTA426).